The chain runs to 374 residues: 4-hydroxy-3-methylbut-2-en-1-yl diphosphate synthase (flavodoxin) (374 aa).

[4Fe-4S] cluster-binding residues include C272, C275, C307, and E314.

Belongs to the IspG family. Requires [4Fe-4S] cluster as cofactor.

The enzyme catalyses (2E)-4-hydroxy-3-methylbut-2-enyl diphosphate + oxidized [flavodoxin] + H2O + 2 H(+) = 2-C-methyl-D-erythritol 2,4-cyclic diphosphate + reduced [flavodoxin]. Its pathway is isoprenoid biosynthesis; isopentenyl diphosphate biosynthesis via DXP pathway; isopentenyl diphosphate from 1-deoxy-D-xylulose 5-phosphate: step 5/6. Converts 2C-methyl-D-erythritol 2,4-cyclodiphosphate (ME-2,4cPP) into 1-hydroxy-2-methyl-2-(E)-butenyl 4-diphosphate. In Acidiphilium cryptum (strain JF-5), this protein is 4-hydroxy-3-methylbut-2-en-1-yl diphosphate synthase (flavodoxin).